Here is a 1318-residue protein sequence, read N- to C-terminus: Serine/threonine-protein kinase ppk18 (1318 aa).

The tract at residues 431–485 (PSVSPEEVHDISQFNHRNDPPITAASVDSSNSFSVHRSSTNHSSTNSGSPNLSRR) is disordered. A compositionally biased stretch (low complexity) spans 462-479 (SFSVHRSSTNHSSTNSGS). Positions 566–934 (YEIIKPISKG…INEIKEHPFF (369 aa)) constitute a Protein kinase domain. ATP contacts are provided by residues 572–580 (ISKGTFGTV) and K595. The active-site Proton acceptor is the D690. The 110-residue stretch at 935–1044 (NGINWDDIFS…KNLSVLERAN (110 aa)) folds into the AGC-kinase C-terminal domain. Disordered stretches follow at residues 968–1022 (GAAE…FSEA), 1058–1078 (KLHI…DMPS), and 1091–1127 (SLMT…GPKS). Residues 972–1000 (SNMSSSVNSGEEVSKDNNVSQERGSQFLR) are compositionally biased toward polar residues. Residues 1091-1115 (SLMTNQGSNFSSTDSTPRKSINSSD) show a composition bias toward polar residues. The span at 1116–1127 (VESRSKTDGPKS) shows a compositional bias: basic and acidic residues. One can recognise a Response regulatory domain in the interval 1200-1316 (KALICVSKLN…LLRGYIARLC (117 aa)).

Belongs to the protein kinase superfamily. Ser/Thr protein kinase family.

It is found in the cytoplasm. It catalyses the reaction L-seryl-[protein] + ATP = O-phospho-L-seryl-[protein] + ADP + H(+). The catalysed reaction is L-threonyl-[protein] + ATP = O-phospho-L-threonyl-[protein] + ADP + H(+). The chain is Serine/threonine-protein kinase ppk18 (ppk18) from Schizosaccharomyces pombe (strain 972 / ATCC 24843) (Fission yeast).